Here is a 326-residue protein sequence, read N- to C-terminus: Polycomb complex protein BMI-1 (326 aa).

An RING-type zinc finger spans residues 18-57 (CVLCGGYFIDATTIIECLHSFCKTCIVRYLETSKYCPICD). A Nuclear localization signal motif is present at residues 81 to 95 (KLVPGLFKNEMKRRR). The interval 162–182 (RYLRCPAAMTVMHLRKFLRSK) is interaction with PHC2. An interaction with E4F1 region spans residues 164 to 228 (LRCPAAMTVM…GPLPLKYRVR (65 aa)). The tract at residues 236 to 326 (IGHQREGLSN…INGSSATSSG (91 aa)) is disordered. A compositionally biased stretch (low complexity) spans 265–278 (LPSTSSCLPSPSTP). Positions 279–310 (VQSPHPQFPHISSTMNGTSSSPGSNHQSSFTN) are enriched in polar residues. Residues 315 to 326 (SSINGSSATSSG) show a composition bias toward low complexity.

As to quaternary structure, component of a PRC1-like complex.

It is found in the nucleus. It localises to the cytoplasm. Its function is as follows. Component of a Polycomb group (PcG) multiprotein PRC1-like complex, a complex class required to maintain the transcriptionally repressive state of many genes, including Hox genes, throughout development. PcG PRC1 complex acts via chromatin remodeling and modification of histones; it mediates monoubiquitination of histone H2A 'Lys-119', rendering chromatin heritably changed in its expressibility. In the PRC1-like complex, regulates the E3 ubiquitin-protein ligase activity of RNF2/RING2. The sequence is that of Polycomb complex protein BMI-1 (BMI1) from Gallus gallus (Chicken).